The primary structure comprises 492 residues: UDP-N-acetylmuramoyl-L-alanyl-D-glutamate--2,6-diaminopimelate ligase (492 aa).

A UDP-N-acetyl-alpha-D-muramoyl-L-alanyl-D-glutamate-binding site is contributed by S21. 98-104 (GTNGKSS) contacts ATP. Residues 144-145 (TT), S171, Q177, and R179 contribute to the UDP-N-acetyl-alpha-D-muramoyl-L-alanyl-D-glutamate site. K211 carries the N6-carboxylysine modification. Meso-2,6-diaminopimelate is bound by residues R372, 396–399 (DNPR), G446, and E450. A Meso-diaminopimelate recognition motif motif is present at residues 396–399 (DNPR).

It belongs to the MurCDEF family. MurE subfamily. The cofactor is Mg(2+). In terms of processing, carboxylation is probably crucial for Mg(2+) binding and, consequently, for the gamma-phosphate positioning of ATP.

Its subcellular location is the cytoplasm. It catalyses the reaction UDP-N-acetyl-alpha-D-muramoyl-L-alanyl-D-glutamate + meso-2,6-diaminopimelate + ATP = UDP-N-acetyl-alpha-D-muramoyl-L-alanyl-gamma-D-glutamyl-meso-2,6-diaminopimelate + ADP + phosphate + H(+). Its pathway is cell wall biogenesis; peptidoglycan biosynthesis. Its function is as follows. Catalyzes the addition of meso-diaminopimelic acid to the nucleotide precursor UDP-N-acetylmuramoyl-L-alanyl-D-glutamate (UMAG) in the biosynthesis of bacterial cell-wall peptidoglycan. In Rickettsia typhi (strain ATCC VR-144 / Wilmington), this protein is UDP-N-acetylmuramoyl-L-alanyl-D-glutamate--2,6-diaminopimelate ligase.